Consider the following 260-residue polypeptide: Electron transfer flavoprotein subunit beta (260 aa).

It belongs to the ETF beta-subunit/FixA family. As to quaternary structure, heterodimer of an alpha and a beta subunit. The cofactor is FAD. AMP serves as cofactor.

Functionally, the electron transfer flavoprotein serves as a specific electron acceptor for other dehydrogenases. It transfers the electrons to the main respiratory chain via ETF-ubiquinone oxidoreductase (ETF dehydrogenase). In Thermoanaerobacterium thermosaccharolyticum (strain ATCC 7956 / DSM 571 / NCIMB 9385 / NCA 3814 / NCTC 13789 / WDCM 00135 / 2032) (Clostridium thermosaccharolyticum), this protein is Electron transfer flavoprotein subunit beta (etfB).